The primary structure comprises 988 residues: RecQ-like DNA helicase blm-1 (988 aa).

Residues 46 to 119 are disordered; that stretch reads CEEREEEYID…QFPSRPQKRL (74 aa). A run of 2 repeats spans residues 121-129 and 130-138. Positions 121–138 are 2 X 9 AA tandem repeats of [DE]-P-P-I-V-D-L-D-[ED]; sequence DPPIVDLDEEPPIVDLDD. The interval 148-185 is disordered; that stretch reads TSEEVVSGDIAPEEEEEEGHDSFDDFESVPAQPPSKNT. Residues 158–174 are compositionally biased toward acidic residues; sequence APEEEEEEGHDSFDDFE. ATP-binding positions include 248 to 252 and 272 to 276; these read FRHRQ and GAGKS. One can recognise a Helicase ATP-binding domain in the interval 256-433; that stretch reads ILSTLMGHDT…RDHLKMQNSK (178 aa). Residues 375–378 carry the DEAH box motif; sequence DEAH. The region spanning 458-603 is the Helicase C-terminal domain; that stretch reads NVVEKMKQLY…VRSMHLNNVL (146 aa). The 3' overhang DNA-binding stretch occupies residues 478-480; the sequence is SRK. Position 562 (R562) interacts with ATP. Residues 580–583 are 3' overhang DNA-binding; that stretch reads RLRR. The Zn(2+) site is built by C615, C633, C640, and C643. 3' overhang DNA-binding stretches follow at residues 676 to 678, 687 to 691, and 736 to 742; these read TLK, ALIKK, and YSVPNQA. The region spanning 807–888 is the HRDC domain; that stretch reads GDVFTRCLQD…ATYWKQVDER (82 aa). Residues 930–988 are disordered; sequence GGGGCRGRGKKRAFSGFSSGRATKKPRATAPSARGKTSGRGGAKPATSLKRNMYPATSM. Positions 939-955 match the Nuclear localization signal motif; that stretch reads KKRAFSGFSSGRATKKP.

Belongs to the helicase family. RecQ subfamily. In terms of assembly, monomer. Homodimer (via N-terminus). Homotetramer (via N-terminus); dimer of dimers. Homohexamer (via N-terminus). Self-association negatively regulates DNA unwinding amplitude and rate. Oligomer forms dissociate into monomer in presence of ATP. Component of the BTR double Holliday Junction dissolution complex composed of at least him-6, top-3, rmh-1 and rmif-2, which is involved in double strand break repair in the germline. May interact with rmh-1; the interaction is required for mutual stability and localization at nuclear foci. Forms a complex composed of cdc-48.1, him-6 and crp-1; within the complex, interacts with cdc-48.1. Zn(2+) serves as cofactor.

The protein localises to the nucleus. It localises to the chromosome. The catalysed reaction is Couples ATP hydrolysis with the unwinding of duplex DNA by translocating in the 3'-5' direction.. The enzyme catalyses ATP + H2O = ADP + phosphate + H(+). In terms of biological role, component of the BTR double Holliday Junction dissolution complex, which is involved in homologous recombination during meiotic double strand break in the germline. Stabilizes and positively regulates the localization of the BTR double Holliday Junction dissolution complex component rmh-1 at nuclear foci during meiotic recombination. Participates in DNA replication and repair. Exhibits a magnesium-dependent ATP-dependent DNA-helicase activity that unwinds single- and double-stranded DNA in a 3'-5' direction. Negatively regulates sister chromatid exchange (SCE). Functionally, ATP-dependent DNA helicase that unwinds single- and double-stranded DNA in a 3'-5' direction. Participates in DNA replication and repair. Negatively regulates sister chromatid exchange (SCE). Stimulates DNA 4-way junction branch migration and DNA Holliday junction dissolution. Binds single-stranded DNA (ssDNA), forked duplex DNA and DNA Holliday junction. The protein is RecQ-like DNA helicase blm-1 of Caenorhabditis elegans.